The following is a 306-amino-acid chain: Pantothenate kinase (306 aa).

91–98 (GSVAVGKS) lines the ATP pocket.

It belongs to the prokaryotic pantothenate kinase family.

The protein resides in the cytoplasm. It carries out the reaction (R)-pantothenate + ATP = (R)-4'-phosphopantothenate + ADP + H(+). The protein operates within cofactor biosynthesis; coenzyme A biosynthesis; CoA from (R)-pantothenate: step 1/5. The polypeptide is Pantothenate kinase (Streptococcus pneumoniae serotype 19F (strain G54)).